Here is a 543-residue protein sequence, read N- to C-terminus: Chaperonin GroEL (543 aa).

ATP contacts are provided by residues 29-32 (TVGP), 86-90 (DGTTT), Gly413, and Asp504.

It belongs to the chaperonin (HSP60) family. In terms of assembly, forms a cylinder of 14 subunits composed of two heptameric rings stacked back-to-back. Interacts with the co-chaperonin GroES.

It localises to the cytoplasm. The catalysed reaction is ATP + H2O + a folded polypeptide = ADP + phosphate + an unfolded polypeptide.. Its function is as follows. Together with its co-chaperonin GroES, plays an essential role in assisting protein folding. The GroEL-GroES system forms a nano-cage that allows encapsulation of the non-native substrate proteins and provides a physical environment optimized to promote and accelerate protein folding. This chain is Chaperonin GroEL, found in Mycoplasma pneumoniae (strain ATCC 29342 / M129 / Subtype 1) (Mycoplasmoides pneumoniae).